A 30-amino-acid chain; its full sequence is Superoxide dismutase [Cu-Zn] 1 (30 aa).

The protein belongs to the Cu-Zn superoxide dismutase family. Requires Cu cation as cofactor. It depends on Zn(2+) as a cofactor. As to expression, expressed in fruits, leaves and pollen grains.

The protein localises to the cytoplasm. It is found in the endoplasmic reticulum. The enzyme catalyses 2 superoxide + 2 H(+) = H2O2 + O2. Its activity is regulated as follows. Inhibited by KCN and H(2)O(2). In terms of biological role, destroys radicals which are normally produced within the cells and which are toxic to biological systems. Probably involved in the protection against oxidative stress during pollen development. In Olea europaea (Common olive), this protein is Superoxide dismutase [Cu-Zn] 1.